A 133-amino-acid polypeptide reads, in one-letter code: Protein PsiE homolog (133 aa).

4 consecutive transmembrane segments (helical) span residues 13–33 (LQWI…IFLI), 55–75 (VESI…IKYF), 81–101 (FPLR…IIVS), and 105–125 (PMET…LYIS).

This sequence belongs to the PsiE family.

It localises to the cell membrane. The protein is Protein PsiE homolog of Bacillus cereus (strain ATCC 10987 / NRS 248).